A 1110-amino-acid polypeptide reads, in one-letter code: Autophagy-related protein 11 (1110 aa).

2 coiled-coil regions span residues 264 to 309 (GKVN…ELHE) and 651 to 803 (AEMF…EKDE).

It belongs to the ATG11 family. Homodimer.

The protein resides in the preautophagosomal structure membrane. It is found in the vacuole membrane. In terms of biological role, involved in cytoplasm to vacuole transport (Cvt), pexophagy, mitophagy and nucleophagy. Recruits mitochondria for their selective degradation via autophagy (mitophagy) during starvation. Works as scaffold proteins that recruit ATG proteins to the pre-autophagosome (PAS), the site of vesicle/autophagosome formation. Required for the Cvt vesicles completion. Contributes through its regulation of pexophagy to survival during engulfment by host phagocytic cells during infection. Through its function in autophagy, acts as an important virulence factor that supports the viability of C.glabrata in the phagosomal compartment of infected innate immune cells. This Candida glabrata (strain ATCC 2001 / BCRC 20586 / JCM 3761 / NBRC 0622 / NRRL Y-65 / CBS 138) (Yeast) protein is Autophagy-related protein 11 (ATG11).